The sequence spans 84 residues: Delta-stichotoxin-Shd3a (84 aa).

The signal sequence occupies residues 1–19; sequence MAYLKIVLVALMLVLGVSA. Positions 20-33 are excised as a propeptide; the sequence is MRLSDQEDQDVSVV. Cystine bridges form between cysteine 38–cysteine 78, cysteine 40–cysteine 68, and cysteine 61–cysteine 79. The residue at position 83 (lysine 83) is a Lysine amide.

This sequence belongs to the sea anemone sodium channel inhibitory toxin family. Type II subfamily.

Its subcellular location is the secreted. It is found in the nematocyst. In terms of biological role, binds specifically to voltage-gated sodium channels (Nav), thereby delaying their inactivation during signal transduction. The chain is Delta-stichotoxin-Shd3a from Stichodactyla haddoni (Saddle carpet anemone).